The chain runs to 309 residues: Polyprenal reductase (309 aa).

The Cytoplasmic portion of the chain corresponds to 1-3; it reads MFH. A helical transmembrane segment spans residues 4 to 24; that stretch reads ILSIVNIIWLLLALCFGAAFC. At 25–67 the chain is on the lumenal side; sequence LNKFSVKLPNRVEHVFQDFIRYGKTKENIKRASWQLVFDLSKR. A helical membrane pass occupies residues 68–88; that stretch reads YFYHFYVVSVMWNGLLLLFSI. At 89–114 the chain is on the cytoplasmic side; sequence RSVVMSEAFPDWIIDVLGSLTGRSRG. A helical transmembrane segment spans residues 115–135; that stretch reads AWNEIHLSTLLLQVLLWVHTL. Over 136–150 the chain is Lumenal; that stretch reads RRLLECLFVSVFSDG. The helical transmembrane segment at 151–171 threads the bilayer; that stretch reads VINVVQYAFGLSYYIILGLTV. Residues 172–185 are Cytoplasmic-facing; that stretch reads LCTNDSLPQSESVS. The helical transmembrane segment at 186–206 threads the bilayer; sequence FFNQLTWYHVVGTLLFFWASF. Topologically, residues 207-255 are lumenal; it reads LQHQSLSLLAKMRTDSSGKVETLAHKMPCGGWFELVSCPHYLAELLIYA. Residues 256–276 traverse the membrane as a helical segment; sequence AMCVCCGCASLTWWMVVLYVL. The Cytoplasmic portion of the chain corresponds to 277–309; sequence CNQALAAQLCHEYYRSKFKTYPHHRKAFIPFVL.

It belongs to the steroid 5-alpha reductase family. Polyprenal reductase subfamily.

The protein localises to the endoplasmic reticulum membrane. The enzyme catalyses a di-trans,poly-cis-dolichal + NADP(+) = a di-trans,poly-cis-polyprenal + NADPH + H(+). It catalyses the reaction a 3-oxo-5alpha-steroid + NADP(+) = a 3-oxo-Delta(4)-steroid + NADPH + H(+). The catalysed reaction is androst-4-ene-3,17-dione + NADPH + H(+) = 5alpha-androstan-3,17-dione + NADP(+). It carries out the reaction 17beta-hydroxy-5alpha-androstan-3-one + NADP(+) = testosterone + NADPH + H(+). It functions in the pathway protein modification; protein glycosylation. In terms of biological role, plays a key role in early steps of protein N-linked glycosylation by being involved in the conversion of polyprenol into dolichol. Acts as a polyprenal reductase that mediates the reduction of polyprenal into dolichal in a NADP-dependent mechanism. Dolichols are required for the synthesis of dolichol-linked monosaccharides and the oligosaccharide precursor used for N-glycosylation. Also able to convert testosterone (T) into 5-alpha-dihydrotestosterone (DHT). The chain is Polyprenal reductase (srd5a3) from Danio rerio (Zebrafish).